A 416-amino-acid chain; its full sequence is MAADLIVGIQWGDEGKGKIVDLLAQEYNVVCRYQGGHNAGHTIVVDGKTIALHLIPSGILNPKAVNIIGNGVVVSPAALLKEMEQFDNLDGRLLISDKAHLIFKYHEEIDRAKERLRGKNAIGTTGRGIGPAYSDKVSRQGHRIGELKDIDTLHKKILDYFETNKIYFEALGISFPSENELRMELQRYQEVLMPYVVDTTNYLWDLLELGEAKILLEGAQGTMLDIDHGTYPYVTSSNTIAAGACTGLGLAPKDIGKVIGIAKAYCTRVGNGPFPTEDNGEDGERLRKQGHEFGTTTGRPRRCGWFDAVAAKYASRINGCDEMALMKLDVLDGFEKIKVASKYLYEGEEIDYMVSDLENVEPIYLEFEGWDRVEGIRSWKDLPLNAKRYIEAIEELIETKISLISTSPDRADTIKR.

Residues 12-18 (GDEGKGK) and 40-42 (GHT) each bind GTP. The active-site Proton acceptor is Asp-13. Asp-13 and Gly-40 together coordinate Mg(2+). Residues 13–16 (DEGK), 38–41 (NAGH), Thr-125, Arg-139, Gln-220, Thr-235, and Arg-299 contribute to the IMP site. Catalysis depends on His-41, which acts as the Proton donor. Residue 295-301 (TTTGRPR) participates in substrate binding. Residues Arg-301, 327–329 (KLD), and 405–407 (STS) contribute to the GTP site.

This sequence belongs to the adenylosuccinate synthetase family. In terms of assembly, homodimer. It depends on Mg(2+) as a cofactor.

It localises to the cytoplasm. It carries out the reaction IMP + L-aspartate + GTP = N(6)-(1,2-dicarboxyethyl)-AMP + GDP + phosphate + 2 H(+). Its pathway is purine metabolism; AMP biosynthesis via de novo pathway; AMP from IMP: step 1/2. In terms of biological role, plays an important role in the de novo pathway of purine nucleotide biosynthesis. Catalyzes the first committed step in the biosynthesis of AMP from IMP. This is Adenylosuccinate synthetase from Nitratiruptor sp. (strain SB155-2).